The sequence spans 413 residues: Multifunctional CCA protein (413 aa).

ATP is bound by residues G8 and R11. 2 residues coordinate CTP: G8 and R11. D21 and D23 together coordinate Mg(2+). 3 residues coordinate ATP: R91, R143, and R146. CTP is bound by residues R91, R143, and R146. Positions 232–333 (TGVHVMMVVD…VRLFERSDAL (102 aa)) constitute an HD domain.

It belongs to the tRNA nucleotidyltransferase/poly(A) polymerase family. Bacterial CCA-adding enzyme type 1 subfamily. In terms of assembly, monomer. Can also form homodimers and oligomers. It depends on Mg(2+) as a cofactor. The cofactor is Ni(2+).

The enzyme catalyses a tRNA precursor + 2 CTP + ATP = a tRNA with a 3' CCA end + 3 diphosphate. The catalysed reaction is a tRNA with a 3' CCA end + 2 CTP + ATP = a tRNA with a 3' CCACCA end + 3 diphosphate. In terms of biological role, catalyzes the addition and repair of the essential 3'-terminal CCA sequence in tRNAs without using a nucleic acid template. Adds these three nucleotides in the order of C, C, and A to the tRNA nucleotide-73, using CTP and ATP as substrates and producing inorganic pyrophosphate. tRNA 3'-terminal CCA addition is required both for tRNA processing and repair. Also involved in tRNA surveillance by mediating tandem CCA addition to generate a CCACCA at the 3' terminus of unstable tRNAs. While stable tRNAs receive only 3'-terminal CCA, unstable tRNAs are marked with CCACCA and rapidly degraded. This is Multifunctional CCA protein from Burkholderia cenocepacia (strain HI2424).